The primary structure comprises 194 residues: Prostaglandin-H2 D-isomerase (194 aa).

The first 24 residues, 1–24, serve as a signal peptide directing secretion; sequence MAASHTLWMGLVLLGVLGVLQTRA. Position 25 is a pyrrolidone carboxylic acid (Q25). The N-linked (GlcNAc...) asparagine glycan is linked to N51. Catalysis depends on C65, which acts as the Nucleophile. Residue N78 is glycosylated (N-linked (GlcNAc...) asparagine). Cysteines 89 and 189 form a disulfide.

It belongs to the calycin superfamily. Lipocalin family. As to quaternary structure, monomer. In terms of tissue distribution, in the male reproductive system, it is expressed in the testis and epididymis, and is secreted into the seminal fluid.

It is found in the rough endoplasmic reticulum. It localises to the nucleus membrane. Its subcellular location is the golgi apparatus. The protein resides in the cytoplasm. The protein localises to the perinuclear region. It is found in the secreted. The enzyme catalyses prostaglandin H2 = prostaglandin D2. In terms of biological role, catalyzes the conversion of PGH2 to PGD2, a prostaglandin involved in smooth muscle contraction/relaxation and a potent inhibitor of platelet aggregation. Involved in a variety of CNS functions, such as sedation, NREM sleep and PGE2-induced allodynia, and may have an anti-apoptotic role in oligodendrocytes. Binds small non-substrate lipophilic molecules, including biliverdin, bilirubin, retinal, retinoic acid and thyroid hormone, and may act as a scavenger for harmful hydrophobic molecules and as a secretory retinoid and thyroid hormone transporter. Possibly involved in development and maintenance of the blood-brain, blood-retina, blood-aqueous humor and blood-testis barrier. It is likely to play important roles in both maturation and maintenance of the central nervous system and male reproductive system. Involved in PLA2G3-dependent maturation of mast cells. PLA2G3 is secreted by immature mast cells and acts on nearby fibroblasts upstream to PTDGS to synthesize PGD2, which in turn promotes mast cell maturation and degranulation via PTGDR. This chain is Prostaglandin-H2 D-isomerase (PTGDS), found in Equus caballus (Horse).